A 32-amino-acid polypeptide reads, in one-letter code: Potassium channel toxin alpha-KTx 9.4 (32 aa).

Disulfide bonds link C3/C19, C6/C24, and C10/C26.

As to expression, expressed by the venom gland.

It is found in the secreted. Functionally, blocker of human voltage-gated potassium channel Kv1.1/KCNA1. The chain is Potassium channel toxin alpha-KTx 9.4 from Hottentotta tamulus (Eastern Indian scorpion).